We begin with the raw amino-acid sequence, 622 residues long: Polypeptide N-acetylgalactosaminyltransferase 18 (622 aa).

At 1–12 (MVCTRKTKTLVS) the chain is on the cytoplasmic side. The helical; Signal-anchor for type II membrane protein transmembrane segment at 13–35 (TCVILSGMTNIICLLYVGWVTNY) threads the bilayer. Over 36–622 (IASVYVRGQE…ITNVLRSLVS (587 aa)) the chain is Lumenal. 5 disulfides stabilise this stretch: cysteine 144–cysteine 392, cysteine 383–cysteine 462, cysteine 497–cysteine 513, cysteine 545–cysteine 558, and cysteine 586–cysteine 606. Residue asparagine 146 is glycosylated (N-linked (GlcNAc...) asparagine). The tract at residues 153–267 (LPEVSIVFIF…VGWAEPVLTR (115 aa)) is catalytic subdomain A. Aspartate 194 serves as a coordination point for substrate. The N-linked (GlcNAc...) asparagine glycan is linked to asparagine 195. Mn(2+)-binding residues include aspartate 251 and histidine 253. The N-linked (GlcNAc...) asparagine glycan is linked to asparagine 320. The segment at 324–400 (PIRSPALIGC…PCSRIAHIER (77 aa)) is catalytic subdomain B. Histidine 397 contributes to the Mn(2+) binding site. Residues arginine 400 and tyrosine 405 each coordinate substrate. The Ricin B-type lectin domain occupies 484–614 (AYGVLQNSLK…KCSGQHWTIT (131 aa)).

This sequence belongs to the glycosyltransferase 2 family. GalNAc-T subfamily. Mn(2+) is required as a cofactor.

The protein resides in the golgi apparatus membrane. The catalysed reaction is L-seryl-[protein] + UDP-N-acetyl-alpha-D-galactosamine = a 3-O-[N-acetyl-alpha-D-galactosaminyl]-L-seryl-[protein] + UDP + H(+). The enzyme catalyses L-threonyl-[protein] + UDP-N-acetyl-alpha-D-galactosamine = a 3-O-[N-acetyl-alpha-D-galactosaminyl]-L-threonyl-[protein] + UDP + H(+). It functions in the pathway protein modification; protein glycosylation. In terms of biological role, catalyzes the initial reaction in O-linked oligosaccharide biosynthesis, the transfer of an N-acetyl-D-galactosamine (GalNAc) residue from UDP-GalNAc to a serine or threonine residue on the protein receptor. This Mus musculus (Mouse) protein is Polypeptide N-acetylgalactosaminyltransferase 18 (Galnt18).